A 260-amino-acid polypeptide reads, in one-letter code: Imidazole glycerol phosphate synthase subunit HisF (260 aa).

Residues D11 and D130 contribute to the active site.

It belongs to the HisA/HisF family. In terms of assembly, heterodimer of HisH and HisF.

The protein resides in the cytoplasm. The enzyme catalyses 5-[(5-phospho-1-deoxy-D-ribulos-1-ylimino)methylamino]-1-(5-phospho-beta-D-ribosyl)imidazole-4-carboxamide + L-glutamine = D-erythro-1-(imidazol-4-yl)glycerol 3-phosphate + 5-amino-1-(5-phospho-beta-D-ribosyl)imidazole-4-carboxamide + L-glutamate + H(+). It functions in the pathway amino-acid biosynthesis; L-histidine biosynthesis; L-histidine from 5-phospho-alpha-D-ribose 1-diphosphate: step 5/9. IGPS catalyzes the conversion of PRFAR and glutamine to IGP, AICAR and glutamate. The HisF subunit catalyzes the cyclization activity that produces IGP and AICAR from PRFAR using the ammonia provided by the HisH subunit. This Caulobacter sp. (strain K31) protein is Imidazole glycerol phosphate synthase subunit HisF.